The primary structure comprises 799 residues: Dipeptidyl peptidase family member 1 (799 aa).

Residues Met-1 to Ala-31 lie on the Cytoplasmic side of the membrane. A helical; Signal-anchor for type II membrane protein transmembrane segment spans residues Ile-32–Leu-52. The Lumenal portion of the chain corresponds to Phe-53–Lys-799. N-linked (GlcNAc...) asparagine glycans are attached at residues Asn-64, Asn-138, Asn-267, and Asn-335. Cys-474 and Cys-477 form a disulfide bridge. Asn-481 carries N-linked (GlcNAc...) asparagine glycosylation. Cys-482 and Cys-500 are oxidised to a cystine. N-linked (GlcNAc...) asparagine glycosylation occurs at Asn-512. Residues Ser-669, Asp-742, and His-774 each act as charge relay system in the active site. Cys-689 and Cys-794 form a disulfide bridge.

This sequence belongs to the peptidase S9B family. DPPIV subfamily.

The protein resides in the cell membrane. Its function is as follows. Removes N-terminal dipeptides sequentially from polypeptides. Essential for control of distal tip cell migration. The chain is Dipeptidyl peptidase family member 1 (dpf-1) from Caenorhabditis elegans.